An 81-amino-acid polypeptide reads, in one-letter code: 8.6 kDa transglutaminase substrate (81 aa).

In terms of assembly, multimeric. In terms of tissue distribution, hemolymph; Hemocyte.

The protein is 8.6 kDa transglutaminase substrate of Tachypleus tridentatus (Japanese horseshoe crab).